Here is a 295-residue protein sequence, read N- to C-terminus: MTNVTGTERVKRGMAEMQKGGVIMDVINAEQAKIAEEAGAVAVMALERVPADIRAAGGVSRMADPTIVEEVMGAVSIPVMAKCRIGHLVEARVLESLGVDYIDESEVLTPADEVYHLNKRDYTVPFVCGCRDIGEAARRIAEGASMLRTKGEPGTGNIVEAVRHMRQVNAEIRQVASLREDELMTYAKNTGAPYEVLREIKRLGRLPVVNFAAGGVATPADAALMMQLGADGVFVGSGIFKSENPAKFARAIVEATTHYEDYELIASLSKGLGNAMKGIEISTLLPEQRMQERGW.

Residue Asp-25 participates in D-ribose 5-phosphate binding. Lys-82 serves as the catalytic Schiff-base intermediate with D-ribose 5-phosphate. Gly-154 is a D-ribose 5-phosphate binding site. Arg-166 is a D-glyceraldehyde 3-phosphate binding site. D-ribose 5-phosphate-binding positions include Gly-215 and Gly-236–Ser-237.

This sequence belongs to the PdxS/SNZ family. In terms of assembly, in the presence of PdxT, forms a dodecamer of heterodimers.

It catalyses the reaction aldehydo-D-ribose 5-phosphate + D-glyceraldehyde 3-phosphate + L-glutamine = pyridoxal 5'-phosphate + L-glutamate + phosphate + 3 H2O + H(+). Its pathway is cofactor biosynthesis; pyridoxal 5'-phosphate biosynthesis. Functionally, catalyzes the formation of pyridoxal 5'-phosphate from ribose 5-phosphate (RBP), glyceraldehyde 3-phosphate (G3P) and ammonia. The ammonia is provided by the PdxT subunit. Can also use ribulose 5-phosphate and dihydroxyacetone phosphate as substrates, resulting from enzyme-catalyzed isomerization of RBP and G3P, respectively. This is Pyridoxal 5'-phosphate synthase subunit PdxS from Bacillus cereus (strain Q1).